Here is a 42-residue protein sequence, read N- to C-terminus: Potassium channel toxin gamma-KTx 1.6 (42 aa).

4 cysteine pairs are disulfide-bonded: Cys5-Cys23, Cys11-Cys34, Cys20-Cys39, and Cys24-Cys41.

It belongs to the ergtoxin family. Gamma-KTx 1 subfamily. As to expression, expressed by the venom gland.

Its subcellular location is the secreted. In terms of biological role, blocks Kv11/ERG potassium channels. The polypeptide is Potassium channel toxin gamma-KTx 1.6 (Centruroides exilicauda (Bark scorpion)).